The sequence spans 102 residues: Small ribosomal subunit protein uS10 (102 aa).

It belongs to the universal ribosomal protein uS10 family. Part of the 30S ribosomal subunit.

Involved in the binding of tRNA to the ribosomes. The chain is Small ribosomal subunit protein uS10 from Methanothrix thermoacetophila (strain DSM 6194 / JCM 14653 / NBRC 101360 / PT) (Methanosaeta thermophila).